A 230-amino-acid chain; its full sequence is RNA-binding riboflavin kinase RibR (230 aa).

The protein belongs to the RibR family.

It carries out the reaction riboflavin + ATP = FMN + ADP + H(+). Functionally, may be directly involved in the regulation of the rib genes. C-terminal part of RibR specifically binds to RFN of the rib leader of the riboflavin biosynthetic operon. The RFN element is a sequence within the rib-leader mRNA reported to serve as a receptor for an FMN-dependent riboswitch. Possibly, RibR produces the comodulator FMN through its own N-terminal flavokinase activity. FMN-activated RibR may stabilize the anti-anti terminator structure of RFN mRNA, causing transcription termination of the rib genes in trans. This chain is RNA-binding riboflavin kinase RibR (ribR), found in Bacillus subtilis (strain 168).